A 68-amino-acid chain; its full sequence is uncharacterized protein (68 aa).

Residues 2 to 67 (KTITLNIKGI…VIEDAGFDAT (66 aa)) enclose the HMA domain. A metal cation-binding residues include Cys13 and Cys16.

This is an uncharacterized protein from Haemophilus influenzae (strain ATCC 51907 / DSM 11121 / KW20 / Rd).